Reading from the N-terminus, the 416-residue chain is Probable glucan 1,3-beta-glucosidase A (416 aa).

The N-terminal stretch at 1–22 (MIFKFSQKALVALCLVVGLAEA) is a signal peptide. Residue Glu211 is the Proton donor of the active site. Disulfide bonds link Cys291–Cys415 and Cys316–Cys342. Residue Glu308 is the Nucleophile of the active site.

It belongs to the glycosyl hydrolase 5 (cellulase A) family. As to quaternary structure, monomer. The cofactor is Mn(2+).

It is found in the secreted. The enzyme catalyses Successive hydrolysis of beta-D-glucose units from the non-reducing ends of (1-&gt;3)-beta-D-glucans, releasing alpha-glucose.. In terms of biological role, beta-glucanases participate in the metabolism of beta-glucan, the main structural component of the cell wall. It could also function biosynthetically as a transglycosylase. The polypeptide is Probable glucan 1,3-beta-glucosidase A (exgA) (Neosartorya fischeri (strain ATCC 1020 / DSM 3700 / CBS 544.65 / FGSC A1164 / JCM 1740 / NRRL 181 / WB 181) (Aspergillus fischerianus)).